The following is a 162-amino-acid chain: Crossover junction endodeoxyribonuclease RuvC (162 aa).

Catalysis depends on residues aspartate 7, glutamate 67, and aspartate 140. Residues aspartate 7, glutamate 67, and aspartate 140 each coordinate Mg(2+).

Belongs to the RuvC family. As to quaternary structure, homodimer which binds Holliday junction (HJ) DNA. The HJ becomes 2-fold symmetrical on binding to RuvC with unstacked arms; it has a different conformation from HJ DNA in complex with RuvA. In the full resolvosome a probable DNA-RuvA(4)-RuvB(12)-RuvC(2) complex forms which resolves the HJ. The cofactor is Mg(2+).

It localises to the cytoplasm. It carries out the reaction Endonucleolytic cleavage at a junction such as a reciprocal single-stranded crossover between two homologous DNA duplexes (Holliday junction).. Its function is as follows. The RuvA-RuvB-RuvC complex processes Holliday junction (HJ) DNA during genetic recombination and DNA repair. Endonuclease that resolves HJ intermediates. Cleaves cruciform DNA by making single-stranded nicks across the HJ at symmetrical positions within the homologous arms, yielding a 5'-phosphate and a 3'-hydroxyl group; requires a central core of homology in the junction. The consensus cleavage sequence is 5'-(A/T)TT(C/G)-3'. Cleavage occurs on the 3'-side of the TT dinucleotide at the point of strand exchange. HJ branch migration catalyzed by RuvA-RuvB allows RuvC to scan DNA until it finds its consensus sequence, where it cleaves and resolves the cruciform DNA. In Heliobacterium modesticaldum (strain ATCC 51547 / Ice1), this protein is Crossover junction endodeoxyribonuclease RuvC.